Here is a 213-residue protein sequence, read N- to C-terminus: Kynurenine formamidase (213 aa).

W18 contributes to the substrate binding site. Residues H48, H52, and D54 each coordinate Zn(2+). The active-site Proton donor/acceptor is H58. H160 and E172 together coordinate Zn(2+).

Belongs to the Cyclase 1 superfamily. KynB family. Homodimer. Zn(2+) serves as cofactor.

It carries out the reaction N-formyl-L-kynurenine + H2O = L-kynurenine + formate + H(+). Its pathway is amino-acid degradation; L-tryptophan degradation via kynurenine pathway; L-kynurenine from L-tryptophan: step 2/2. Its function is as follows. Catalyzes the hydrolysis of N-formyl-L-kynurenine to L-kynurenine, the second step in the kynurenine pathway of tryptophan degradation. The sequence is that of Kynurenine formamidase from Burkholderia ambifaria (strain MC40-6).